The following is a 596-amino-acid chain: Meiosis-specific protein ASY1 (596 aa).

Positions 15-228 (QDSLLLTRNL…SKHLVLTLKV (214 aa)) constitute an HORMA domain. Residues 235-303 (CEDENDDMQD…NTQDPAENEQ (69 aa)) are disordered. The segment covering 282 to 295 (QDDDDGEVDEDDNT) has biased composition (acidic residues). Residues 351–449 (SKTGKDMYIK…ASSNRRLGKR (99 aa)) form the SWIRM domain. Residues 562–596 (TVNCSQASQDRRGRKTSMVREPILQYSKRQKSQAN) form a disordered region.

As to quaternary structure, interacts with ASY3.

It localises to the chromosome. The protein localises to the nucleus. In terms of biological role, required for normal meiosis in male and female gametophytes. Plays a crucial role in coordinating the activity of DMC1, a key member of the homologous recombination machinery. Acts at the interface between the developing chromosome axes and the recombination machinery to ensure DMC1-mediated interhomolog recombination. The sequence is that of Meiosis-specific protein ASY1 from Arabidopsis thaliana (Mouse-ear cress).